We begin with the raw amino-acid sequence, 382 residues long: MNNQSLQRAAMISEHLAPTSELNMNQTSAPIKTAKEELADFVEIFPILTNEILKELPGMDMPPQTIAWVEKMINVNVSGGKMNRGLTVLHSLQLLVEGRQLSRSEIFLANVLGWCVEWLQAFFLVADDIMDQSITRRGQPCWYRQANPISNNGTIGSIAINDSFILESCIYILIKKYFRNEPYYADILDIFHETSYQTELGQLLDLTTQPNRGDFSLFTLNTYRRIVKYKTAYYSFYLPVALAMLMAGITSTPAFSTAKDILLPMGEFFQVQDDFLDCYGSPAVIGKIGRDIEENKCSWMICQAILNGTPEQINLLKKHYGLDNPTDVELVKKIYGEIGLKKIFKDYEDESYAFLISKIKSVRIMPQEVFIKLLSKIYKRDL.

Positions 81, 84, and 120 each coordinate isopentenyl diphosphate. Mg(2+)-binding residues include aspartate 127 and aspartate 131. Arginine 136 serves as a coordination point for dimethylallyl diphosphate. Arginine 137 contacts isopentenyl diphosphate. Dimethylallyl diphosphate contacts are provided by lysine 230, threonine 231, glutamine 270, lysine 287, and lysine 296.

Belongs to the FPP/GGPP synthase family. Mg(2+) is required as a cofactor.

Its subcellular location is the cytoplasm. The catalysed reaction is isopentenyl diphosphate + dimethylallyl diphosphate = (2E)-geranyl diphosphate + diphosphate. It carries out the reaction isopentenyl diphosphate + (2E)-geranyl diphosphate = (2E,6E)-farnesyl diphosphate + diphosphate. It participates in isoprenoid biosynthesis; farnesyl diphosphate biosynthesis; farnesyl diphosphate from geranyl diphosphate and isopentenyl diphosphate: step 1/1. The protein operates within isoprenoid biosynthesis; geranyl diphosphate biosynthesis; geranyl diphosphate from dimethylallyl diphosphate and isopentenyl diphosphate: step 1/1. With respect to regulation, inhibited by aminobisphosphonate drugs (aBP), such as risedronate and alendronate. In terms of biological role, key enzyme in isoprenoid biosynthesis which catalyzes the formation of farnesyl diphosphate (FPP), a sterol precursor. Involved in the inhibition of cell growth. The protein is Farnesyl diphosphate synthase (fps) of Dictyostelium discoideum (Social amoeba).